A 160-amino-acid chain; its full sequence is UPF0262 protein Mrad2831_3513 (160 aa).

The protein belongs to the UPF0262 family.

This chain is UPF0262 protein Mrad2831_3513, found in Methylobacterium radiotolerans (strain ATCC 27329 / DSM 1819 / JCM 2831 / NBRC 15690 / NCIMB 10815 / 0-1).